The following is a 199-amino-acid chain: Small ribosomal subunit protein uS7 (199 aa).

This sequence belongs to the universal ribosomal protein uS7 family. As to quaternary structure, part of the 30S ribosomal subunit.

One of the primary rRNA binding proteins, it binds directly to 16S rRNA where it nucleates assembly of the head domain of the 30S subunit. Is located at the subunit interface close to the decoding center. In Cenarchaeum symbiosum (strain A), this protein is Small ribosomal subunit protein uS7.